The primary structure comprises 571 residues: Phosphomethylpyrimidine synthase (571 aa).

Residues Asn201, Met230, Tyr259, His295, 315 to 317, 356 to 359, and Glu395 each bind substrate; these read SRG and DALR. Residue His399 coordinates Zn(2+). A substrate-binding site is contributed by Tyr422. A Zn(2+)-binding site is contributed by His463. Residues Cys545, Cys548, and Cys553 each coordinate [4Fe-4S] cluster.

This sequence belongs to the ThiC family. It depends on [4Fe-4S] cluster as a cofactor.

The catalysed reaction is 5-amino-1-(5-phospho-beta-D-ribosyl)imidazole + S-adenosyl-L-methionine = 4-amino-2-methyl-5-(phosphooxymethyl)pyrimidine + CO + 5'-deoxyadenosine + formate + L-methionine + 3 H(+). It participates in cofactor biosynthesis; thiamine diphosphate biosynthesis. In terms of biological role, catalyzes the synthesis of the hydroxymethylpyrimidine phosphate (HMP-P) moiety of thiamine from aminoimidazole ribotide (AIR) in a radical S-adenosyl-L-methionine (SAM)-dependent reaction. This chain is Phosphomethylpyrimidine synthase, found in Chlorobium phaeovibrioides (strain DSM 265 / 1930) (Prosthecochloris vibrioformis (strain DSM 265)).